Here is a 317-residue protein sequence, read N- to C-terminus: Hairy/enhancer-of-split related with YRPW motif protein 1 (317 aa).

The disordered stretch occupies residues 1 to 59 (MKRNHDFSSSDSELDENIEVEKESADENAGANSPLGSMSPSTTSQVQARKRRRGIIEKR). A compositionally biased stretch (polar residues) spans 30-47 (GANSPLGSMSPSTTSQVQ). One can recognise a bHLH domain in the interval 48–103 (ARKRRRGIIEKRRRDRINNSLSELRRLVPSAFEKQGSAKLEKAEILQMTVDHLKML). Residues 121–157 (YRGLGFRECLAETARYLSIIEGLDNTDPLRIRLVSHL) form the Orange domain. 2 stretches are compositionally biased toward low complexity: residues 193–226 (QQQQ…SAPS) and 248–264 (PPST…TASK). The disordered stretch occupies residues 193–264 (QQQQQQGAPL…PGLTPPTASK (72 aa)). Positions 307–310 (YRPW) match the YRPW motif motif.

Belongs to the HEY family.

The protein resides in the nucleus. In terms of biological role, transcriptional repressor which functions as a downstream effector of Notch signaling. This is Hairy/enhancer-of-split related with YRPW motif protein 1 (hey1) from Danio rerio (Zebrafish).